Consider the following 336-residue polypeptide: P2Y purinoceptor 13 (336 aa).

Over 1–32 (MLGTVNTTGMQGFNKSERCPRDTRMTQLLFPV) the chain is Extracellular. N-linked (GlcNAc...) asparagine glycans are attached at residues Asn6 and Asn14. A helical transmembrane segment spans residues 33-53 (LYTVVFFTGVLLNTLALWVFI). Residues 54 to 60 (HIPSNST) lie on the Cytoplasmic side of the membrane. A helical membrane pass occupies residues 61 to 81 (FIIYLKNTLVADLIMTLMLPF). At 82-100 (KILSDSRLAPWQLRGFVCT) the chain is on the extracellular side. Cys99 and Cys176 are disulfide-bonded. The chain crosses the membrane as a helical span at residues 101 to 121 (FSSVVFYETMYVGIMMLGLIA). At 122-144 (FDRFLKIVVPFRKTFVKKTAFAK) the chain is on the cytoplasmic side. Residues 145-165 (IVSISIWLLMFLISLPNMILN) traverse the membrane as a helical segment. Over 166 to 193 (KEATASTVKKCASLKSPLGLLWHQVVSH) the chain is Extracellular. A helical transmembrane segment spans residues 194–214 (TCQFIFWTVFILMLLFYTVIA). The Cytoplasmic portion of the chain corresponds to 215–237 (KKVYDSYRKFKSRDSKHKRLEAK). Residues 238 to 258 (VFIVMAVFFVCFAPFHFVRVP) form a helical membrane-spanning segment. At 259 to 281 (YTHSQTTNKTDCRLENQLFLAKE) the chain is on the extracellular side. Asn266 is a glycosylation site (N-linked (GlcNAc...) asparagine). Residues 282-302 (STLFLATTNICMDPLIYIILC) form a helical membrane-spanning segment. The Cytoplasmic segment spans residues 303–336 (KKFTRKVPCMRWRTKTAASSDEHHSSQTDNITLS).

The protein belongs to the G-protein coupled receptor 1 family. In terms of tissue distribution, highest levels in spleen, liver brain and kidney. Lower but significant level are also detected in intestine, stomach, skeletal muscle, testis, heart and lung.

It localises to the cell membrane. Receptor for ADP. Coupled to G(i)-proteins. May play a role in hematopoiesis and the immune system. This chain is P2Y purinoceptor 13 (P2ry13), found in Rattus norvegicus (Rat).